The following is a 451-amino-acid chain: UDP-N-acetylmuramoylalanine--D-glutamate ligase (451 aa).

116–122 is a binding site for ATP; sequence GTNGKTT.

This sequence belongs to the MurCDEF family.

The protein localises to the cytoplasm. The catalysed reaction is UDP-N-acetyl-alpha-D-muramoyl-L-alanine + D-glutamate + ATP = UDP-N-acetyl-alpha-D-muramoyl-L-alanyl-D-glutamate + ADP + phosphate + H(+). It participates in cell wall biogenesis; peptidoglycan biosynthesis. Cell wall formation. Catalyzes the addition of glutamate to the nucleotide precursor UDP-N-acetylmuramoyl-L-alanine (UMA). In Clostridioides difficile (strain 630) (Peptoclostridium difficile), this protein is UDP-N-acetylmuramoylalanine--D-glutamate ligase.